The sequence spans 76 residues: Cytochrome c oxidase subunit 6C-2 (76 aa).

Over 4–14 (GALLPKPQMRG) the chain is Mitochondrial matrix. Residues 15-55 (LLAKRLRVHIVGAFVVALGVAAAYKFGVAEPRKKAYADFYR) form a helical membrane-spanning segment. Topologically, residues 56–76 (NYDSMKDFEEMRQAGVFQSAK) are mitochondrial intermembrane. At S74 the chain carries Phosphoserine.

The protein belongs to the cytochrome c oxidase subunit 6c family. In terms of assembly, component of the cytochrome c oxidase (complex IV, CIV), a multisubunit enzyme composed of 14 subunits. The complex is composed of a catalytic core of 3 subunits MT-CO1, MT-CO2 and MT-CO3, encoded in the mitochondrial DNA, and 11 supernumerary subunits COX4I, COX5A, COX5B, COX6A, COX6B, COX6C, COX7A, COX7B, COX7C, COX8 and NDUFA4, which are encoded in the nuclear genome. The complex exists as a monomer or a dimer and forms supercomplexes (SCs) in the inner mitochondrial membrane with NADH-ubiquinone oxidoreductase (complex I, CI) and ubiquinol-cytochrome c oxidoreductase (cytochrome b-c1 complex, complex III, CIII), resulting in different assemblies (supercomplex SCI(1)III(2)IV(1) and megacomplex MCI(2)III(2)IV(2)).

It is found in the mitochondrion inner membrane. It functions in the pathway energy metabolism; oxidative phosphorylation. Its function is as follows. Component of the cytochrome c oxidase, the last enzyme in the mitochondrial electron transport chain which drives oxidative phosphorylation. The respiratory chain contains 3 multisubunit complexes succinate dehydrogenase (complex II, CII), ubiquinol-cytochrome c oxidoreductase (cytochrome b-c1 complex, complex III, CIII) and cytochrome c oxidase (complex IV, CIV), that cooperate to transfer electrons derived from NADH and succinate to molecular oxygen, creating an electrochemical gradient over the inner membrane that drives transmembrane transport and the ATP synthase. Cytochrome c oxidase is the component of the respiratory chain that catalyzes the reduction of oxygen to water. Electrons originating from reduced cytochrome c in the intermembrane space (IMS) are transferred via the dinuclear copper A center (CU(A)) of subunit 2 and heme A of subunit 1 to the active site in subunit 1, a binuclear center (BNC) formed by heme A3 and copper B (CU(B)). The BNC reduces molecular oxygen to 2 water molecules using 4 electrons from cytochrome c in the IMS and 4 protons from the mitochondrial matrix. The protein is Cytochrome c oxidase subunit 6C-2 (Cox6c2) of Rattus norvegicus (Rat).